The following is a 335-amino-acid chain: MTLPLLGPMTLSGFAHSWFFLFLLVVAGLIAIYVVLQLARQKRMLRFANMELLESVAPQRPSRYRHIPAMLLALSLVLFTVAMAGPTHDVRIPRNRAVVMLVIDVSQSMRATDVEPNRMVAAQEAAKQFADELTPGINLGLIAYAGTATVLVSPTTNREATKAALDKLQFADRTATGEAIFTALQAIATVGAVIGGGDTPPPARIVLFSDGKETMPTNPDNPKGAYTAARTAKDQGVPISTISFGTPYGFVEINDQRQPVPVDDETMKKVAQLSGGNSYNAATLAELNSVYVSLQQQIGYETIRGDASMGWLRLGALVLVAAALAALLINRRLPT.

The next 2 helical transmembrane spans lie at 18–38 (WFFLFLLVVAGLIAIYVVLQL) and 67–87 (IPAMLLALSLVLFTVAMAGPT). Residues 98–298 (VVMLVIDVSQ…SVYVSLQQQI (201 aa)) form the VWFA domain. Residues 309 to 329 (MGWLRLGALVLVAAALAALLI) traverse the membrane as a helical segment.

It belongs to the UPF0353 family.

Its subcellular location is the cell membrane. The protein is UPF0353 protein MUL_1490 of Mycobacterium ulcerans (strain Agy99).